Reading from the N-terminus, the 173-residue chain is N-alpha-acetyltransferase 20 (173 aa).

Residues 2-151 (TTIRRFVCDD…DALDMRKALP (150 aa)) enclose the N-acetyltransferase domain.

It belongs to the acetyltransferase family. ARD1 subfamily.

Seems to be involved in N-acetylation. In Dictyostelium discoideum (Social amoeba), this protein is N-alpha-acetyltransferase 20 (nat5).